The following is a 274-amino-acid chain: MAVIKCKPTSPGRRHVVKVVNTDLHKGKPFAGLLAKKSKSGGRNNTGRITVRHVGGGHKQHYRLIDFKRDKDGIPAKIERLEYDPNRTANIALVLYADGERRYILAAKGMQAGDKIQSGVAAEIKTGNAMPLRNIPVGSVVHAVEMKPGKGAQIARSAGAYVQVVARDGAYATLRLRSGEMRKVPVDCRATFGEVGNAEHMLRQLGKAGAKRWRGIRPTVRGVAMNPVDHPHGGGEGRTSGGRHPVTPWGVPTKGYKTRSNKRTDKYIVRRRNK.

Residues 223–274 (VAMNPVDHPHGGGEGRTSGGRHPVTPWGVPTKGYKTRSNKRTDKYIVRRRNK) are disordered.

This sequence belongs to the universal ribosomal protein uL2 family. Part of the 50S ribosomal subunit. Forms a bridge to the 30S subunit in the 70S ribosome.

One of the primary rRNA binding proteins. Required for association of the 30S and 50S subunits to form the 70S ribosome, for tRNA binding and peptide bond formation. It has been suggested to have peptidyltransferase activity; this is somewhat controversial. Makes several contacts with the 16S rRNA in the 70S ribosome. The protein is Large ribosomal subunit protein uL2 of Shewanella baltica (strain OS223).